The sequence spans 619 residues: Chaperone protein HscA homolog (619 aa).

It belongs to the heat shock protein 70 family.

Its function is as follows. Chaperone involved in the maturation of iron-sulfur cluster-containing proteins. Has a low intrinsic ATPase activity which is markedly stimulated by HscB. The chain is Chaperone protein HscA homolog from Pseudomonas aeruginosa (strain LESB58).